A 340-amino-acid chain; its full sequence is MKRIAVLTSGGDAPGMNAAIRAVVRKAISEGIEVYGINHGYAGMVAGDIFPLTSASVGDKIGRGGTFLYSARYPEFAQVEGQLAGIEQLKKFGIEGVVVIGGDGSYHGAMRLTEHGFPAVGLPGTIDNDIVGTDFTIGFDTAVSTVVDALDKIRDTSSSHNRTFVVEVMGRNAGDIALNAGIAAGADDISIPELEFKFENVVNNINKGYEKGKNHHIIIVAEGVMTGEEFATKLKEAGYKGDLRVSVLGHIQRGGSPTARDRVLASRMGARAVELLRDGIGGVAVGIRNEELVESPILGTAEEGALFSLTTEGGIKVNNPHKAGLELYRLNSALNNLNLN.

Gly-11 provides a ligand contact to ATP. 21-25 (RAVVR) is a binding site for ADP. Residues 72–73 (RY) and 102–105 (GDGS) contribute to the ATP site. Asp-103 is a Mg(2+) binding site. 125-127 (TID) is a binding site for substrate. Catalysis depends on Asp-127, which acts as the Proton acceptor. ADP is bound at residue Arg-154. Substrate is bound by residues Arg-162 and 169 to 171 (MGR). Residues 185-187 (GAD), Lys-211, and 213-215 (KNH) each bind ADP. Residues Glu-222, Arg-244, and 250–253 (HIQR) each bind substrate.

This sequence belongs to the phosphofructokinase type A (PFKA) family. ATP-dependent PFK group I subfamily. Prokaryotic clade 'B1' sub-subfamily. Homotetramer. Requires Mg(2+) as cofactor.

It is found in the cytoplasm. It carries out the reaction beta-D-fructose 6-phosphate + ATP = beta-D-fructose 1,6-bisphosphate + ADP + H(+). It functions in the pathway carbohydrate degradation; glycolysis; D-glyceraldehyde 3-phosphate and glycerone phosphate from D-glucose: step 3/4. Allosterically activated by ADP and other diphosphonucleosides, and allosterically inhibited by phosphoenolpyruvate. Its function is as follows. Catalyzes the phosphorylation of D-fructose 6-phosphate to fructose 1,6-bisphosphate by ATP, the first committing step of glycolysis. In Lactococcus lactis subsp. lactis (Streptococcus lactis), this protein is ATP-dependent 6-phosphofructokinase.